Consider the following 416-residue polypeptide: Adenylosuccinate synthetase (416 aa).

GTP contacts are provided by residues 13–19 (GDEGKGK) and 41–43 (GHT). Aspartate 14 functions as the Proton acceptor in the catalytic mechanism. Mg(2+)-binding residues include aspartate 14 and glycine 41. IMP contacts are provided by residues 14 to 17 (DEGK), 39 to 42 (NAGH), threonine 126, arginine 140, glutamine 220, threonine 235, and arginine 299. Histidine 42 serves as the catalytic Proton donor. Substrate is bound at residue 295-301 (TTTGRKR). GTP contacts are provided by residues arginine 301, 327–329 (KLD), and 405–407 (STS).

This sequence belongs to the adenylosuccinate synthetase family. Homodimer. Mg(2+) serves as cofactor.

Its subcellular location is the cytoplasm. The enzyme catalyses IMP + L-aspartate + GTP = N(6)-(1,2-dicarboxyethyl)-AMP + GDP + phosphate + 2 H(+). It participates in purine metabolism; AMP biosynthesis via de novo pathway; AMP from IMP: step 1/2. In terms of biological role, plays an important role in the de novo pathway of purine nucleotide biosynthesis. Catalyzes the first committed step in the biosynthesis of AMP from IMP. The chain is Adenylosuccinate synthetase from Campylobacter fetus subsp. fetus (strain 82-40).